The sequence spans 87 residues: uncharacterized protein (87 aa).

This sequence belongs to the SF3B5 family.

This is an uncharacterized protein from Arabidopsis thaliana (Mouse-ear cress).